The sequence spans 257 residues: 1-acyl-sn-glycerol-3-phosphate acyltransferase (257 aa).

A helical transmembrane segment spans residues 10–30 (VLFYLLLSASAFVWGTLSFFI). The short motif at 82 to 87 (HQSTWE) is the HXXXXD motif element. A helical membrane pass occupies residues 105–125 (ELLYVPFFGWALALLKPIAID).

It belongs to the 1-acyl-sn-glycerol-3-phosphate acyltransferase family.

It localises to the cell inner membrane. It carries out the reaction a 1-acyl-sn-glycero-3-phosphate + an acyl-CoA = a 1,2-diacyl-sn-glycero-3-phosphate + CoA. It participates in phospholipid metabolism; CDP-diacylglycerol biosynthesis; CDP-diacylglycerol from sn-glycerol 3-phosphate: step 2/3. Functionally, converts lysophosphatidic acid (LPA) into phosphatidic acid by incorporating acyl moiety at the 2 position. The sequence is that of 1-acyl-sn-glycerol-3-phosphate acyltransferase from Pseudomonas aeruginosa (strain ATCC 15692 / DSM 22644 / CIP 104116 / JCM 14847 / LMG 12228 / 1C / PRS 101 / PAO1).